A 1470-amino-acid chain; its full sequence is MFVKNFIHKLKELKQKSLDKFANLLYDYGGYVYDRPCTFIICSLICCLLLTCGFYFKEHEKDIYKLYSISNSYAYETNETINDFFYKSRRCFILVESNVNLLKPKILRELQKFEEGTKDIEVDLSEINECKTNSELPPEQSHVAKELYKTLIQRSEENLKSGKINGSLFDYSDLDENGKSVLSLAGKENNDDTLIEGDNKNDEETSANNNNNEDDNNEDDNNEDDNNEDDNNENDNNNNNEDDNNNDDDDDEDNEEEDEEKQKSLREKLYRKIYEMLKKKKENIVLDENNPNVNFTDYKDDVFYPYQYIPPMLIKADRCKLQNVFGDKNLNIDLREASDGLKKQITYTLEDICEKKYGDCNFSSLFLYYEKGNGYIDYPIKVDNLDFYVNRRTYKEMMFKGILGNMVYEKSGSKYIIKSANAIMTVIPLLNSHTYEPYALAYEKKLIDYVRFYNLDDIIQDEETNDDNDPFIRFHVFTDRSLEDEVDRISKIDNLTRLLLLIGVLLIFMYALFNNVTSVLYRSKPLCAVMGIFCGFLGFLSGSGFLYFLGVKSVPPAETVPFLVIGVGVDDVFVILNSYSLLFMVKDNKKRIQMCLKDSALAITVTTLTNIIAFLISAISPFYSICAFSLFTASSLFFGYLMVLTFLLSFLCIEAKLEKKKRNIFTGTFHLFRSIFMKSSKKNKKENKENNIHDDGDNDNDEKKKDLSLEVKNNEDDYENISIYEWIHNLYLFEESINKKKKNAALVYASNNGMSSNLNNVNEDGFPNPSKIVSMEDVKKRNIKKDDAYINKEDEEGGGYYNKDDNKKKDILGKKQKKNNNNVTLVSKKGEDNELDVYYENLDEKTNDKYKMNNIKSSKLKYDNDKKDGAIINNRPSSDEEYKEEKDKNKINILNDVFNDITIKPNENILLDRGDVIKSSGYDSSYNDLQSSSLPNPSSNEVLNKTTMVYNETDLKDNKKEIKSSKKNVKDIKKSDMIHDDTYDIINSNNKNILLSSNEINNNSNNTNKFNNNSTELATKDTQQFINGHDKNIYLLSSHDNALFYKYIYEEPKGNIGKYFRSLVKNYYVPFLSSRFGKTIVYIMFTIIIAMSIYGCTLMKKGIKYDKAFPVDSYVRRFTTAKIKYFPDFGDFIEVYYFDKHFINKYRGLEKNTKEAASSFLYSDLTDRQIMNSPKINKNVHWENTNLQEELINMHNTLESQEFVTSVANGFTFFLNKNKSSLRKENPQEFYEIFANWLKKDFVGNLFKNDFVFLNGKLVAWRFHYFQKNVDDSEISSKWLKACKQITKLENHNVQMVCFHLSSIFNETDESIIEVTLINLGITILTILVVTAYIIKGFYSCVIIALIIFLIDLCIFGFMCLCGITMNIISMVILVLSVGFSIDHTSHIVQAFSHSMGRTRDEKMKESLHLMIGPVLHSGLSTWFVISTLFFSNKDFTVIFFQTLSLVLFFSITFSSMFLPVLLSSFGPLH.

At 1–3 (MFV) the chain is on the cytoplasmic side. The stretch at 4 to 34 (KNFIHKLKELKQKSLDKFANLLYDYGGYVYD) is an intramembrane region. A topological domain (cytoplasmic) is located at residue R35. The helical transmembrane segment at 36–56 (PCTFIICSLICCLLLTCGFYF) threads the bilayer. At 57–493 (KEHEKDIYKL…DEVDRISKID (437 aa)) the chain is on the extracellular side. N-linked (GlcNAc...) asparagine glycosylation is found at N78, N165, N294, and N361. Residues 494 to 514 (NLTRLLLLIGVLLIFMYALFN) form a helical membrane-spanning segment. Residues 494–653 (NLTRLLLLIG…LTFLLSFLCI (160 aa)) enclose the SSD domain. Topologically, residues 515-524 (NVTSVLYRSK) are cytoplasmic. A helical membrane pass occupies residues 525–549 (PLCAVMGIFCGFLGFLSGSGFLYFL). At 550–554 (GVKSV) the chain is on the extracellular side. Residues 555-582 (PPAETVPFLVIGVGVDDVFVILNSYSLL) traverse the membrane as a helical segment. The Cytoplasmic portion of the chain corresponds to 583–587 (FMVKD). Residues 588–619 (NKKRIQMCLKDSALAITVTTLTNIIAFLISAI) form a helical membrane-spanning segment. The Extracellular portion of the chain corresponds to 620-622 (SPF). The helical transmembrane segment at 623 to 659 (YSICAFSLFTASSLFFGYLMVLTFLLSFLCIEAKLEK) threads the bilayer. Over 660–663 (KKRN) the chain is Cytoplasmic. An intramembrane segment occupies 664–673 (IFTGTFHLFR). Topologically, residues 674–1057 (SIFMKSSKKN…IYEEPKGNIG (384 aa)) are cytoplasmic. The stretch at 1058–1073 (KYFRSLVKNYYVPFLS) is an intramembrane region. A topological domain (cytoplasmic) is located at residue S1074. A helical transmembrane segment spans residues 1075–1098 (RFGKTIVYIMFTIIIAMSIYGCTL). Topologically, residues 1099–1300 (MKKGIKYDKA…NHNVQMVCFH (202 aa)) are extracellular. N1218 is a glycosylation site (N-linked (GlcNAc...) asparagine). Residues 1301 to 1334 (LSSIFNETDESIIEVTLINLGITILTILVVTAYI) traverse the membrane as a helical segment. Residues 1335–1337 (IKG) are Cytoplasmic-facing. Residues 1338 to 1361 (FYSCVIIALIIFLIDLCIFGFMCL) traverse the membrane as a helical segment. At 1362–1367 (CGITMN) the chain is on the extracellular side. Residues 1368-1394 (IISMVILVLSVGFSIDHTSHIVQAFSH) traverse the membrane as a helical segment. The Cytoplasmic segment spans residues 1395 to 1399 (SMGRT). Residues 1400 to 1431 (RDEKMKESLHLMIGPVLHSGLSTWFVISTLFF) form a helical membrane-spanning segment. Topologically, residues 1432 to 1434 (SNK) are extracellular. A helical transmembrane segment spans residues 1435 to 1466 (DFTVIFFQTLSLVLFFSITFSSMFLPVLLSSF). At 1467–1470 (GPLH) the chain is on the cytoplasmic side.

The protein belongs to the patched family.

The protein resides in the cell membrane. It carries out the reaction cholesterol(in) = cholesterol(out). Its function is as follows. Facilitates cholesterol efflux from membranes in a pH-dependent manner. Required for maintaining normal parasite plasma membrane lipid composition. Required for the proper functioning of digestive vacuole. Required for the viability of blood-stage parasites. The protein is Niemann-Pick type C1-related protein of Plasmodium falciparum (isolate 3D7).